Here is a 449-residue protein sequence, read N- to C-terminus: Bifunctional protein GlmU (449 aa).

The tract at residues 1–229 (MNHFAVILAA…FEETIGVNDR (229 aa)) is pyrophosphorylase. UDP-N-acetyl-alpha-D-glucosamine-binding positions include 8-11 (LAAG), lysine 22, glutamine 72, and 77-78 (GT). Residue aspartate 102 participates in Mg(2+) binding. Residues glycine 139, glutamate 154, asparagine 169, and asparagine 227 each coordinate UDP-N-acetyl-alpha-D-glucosamine. Asparagine 227 serves as a coordination point for Mg(2+). The tract at residues 230–250 (VALAQAETSMRKRTNEHWMRQ) is linker. An N-acetyltransferase region spans residues 251–449 (GVTFIDPAST…ERQTTKPDYR (199 aa)). UDP-N-acetyl-alpha-D-glucosamine contacts are provided by arginine 332 and lysine 350. The active-site Proton acceptor is the histidine 362. UDP-N-acetyl-alpha-D-glucosamine is bound by residues tyrosine 365 and asparagine 376. Acetyl-CoA is bound by residues 385-386 (NY), alanine 422, and arginine 439.

It in the N-terminal section; belongs to the N-acetylglucosamine-1-phosphate uridyltransferase family. The protein in the C-terminal section; belongs to the transferase hexapeptide repeat family. In terms of assembly, homotrimer. The cofactor is Mg(2+).

It localises to the cytoplasm. It carries out the reaction alpha-D-glucosamine 1-phosphate + acetyl-CoA = N-acetyl-alpha-D-glucosamine 1-phosphate + CoA + H(+). It catalyses the reaction N-acetyl-alpha-D-glucosamine 1-phosphate + UTP + H(+) = UDP-N-acetyl-alpha-D-glucosamine + diphosphate. It functions in the pathway nucleotide-sugar biosynthesis; UDP-N-acetyl-alpha-D-glucosamine biosynthesis; N-acetyl-alpha-D-glucosamine 1-phosphate from alpha-D-glucosamine 6-phosphate (route II): step 2/2. The protein operates within nucleotide-sugar biosynthesis; UDP-N-acetyl-alpha-D-glucosamine biosynthesis; UDP-N-acetyl-alpha-D-glucosamine from N-acetyl-alpha-D-glucosamine 1-phosphate: step 1/1. It participates in bacterial outer membrane biogenesis; LPS lipid A biosynthesis. In terms of biological role, catalyzes the last two sequential reactions in the de novo biosynthetic pathway for UDP-N-acetylglucosamine (UDP-GlcNAc). The C-terminal domain catalyzes the transfer of acetyl group from acetyl coenzyme A to glucosamine-1-phosphate (GlcN-1-P) to produce N-acetylglucosamine-1-phosphate (GlcNAc-1-P), which is converted into UDP-GlcNAc by the transfer of uridine 5-monophosphate (from uridine 5-triphosphate), a reaction catalyzed by the N-terminal domain. The protein is Bifunctional protein GlmU of Exiguobacterium sibiricum (strain DSM 17290 / CCUG 55495 / CIP 109462 / JCM 13490 / 255-15).